A 235-amino-acid polypeptide reads, in one-letter code: Ion-translocating oxidoreductase complex subunit E (235 aa).

5 helical membrane passes run 63–83, 93–113, 117–137, 152–172, and 206–226; these read LGLG…ISLF, IPIY…LMNA, TLYQ…IIIG, IWDG…LGAL, and SFLL…LLAI.

It belongs to the NqrDE/RnfAE family. As to quaternary structure, the complex is composed of six subunits: RnfA, RnfB, RnfC, RnfD, RnfE and RnfG.

Its subcellular location is the cell inner membrane. In terms of biological role, part of a membrane-bound complex that couples electron transfer with translocation of ions across the membrane. This is Ion-translocating oxidoreductase complex subunit E from Haemophilus influenzae (strain 86-028NP).